The sequence spans 268 residues: Phosphatidylglycerol--prolipoprotein diacylglyceryl transferase (268 aa).

Helical transmembrane passes span 14–34 (IIFS…LIGF), 60–80 (LLFN…VLFY), 95–115 (VWEG…AMLV), 124–144 (FWVV…MGRI), 176–196 (SQLY…NWFI), 203–223 (GSVA…VEFF), and 238–258 (ISMG…FIVL). R143 contacts a 1,2-diacyl-sn-glycero-3-phospho-(1'-sn-glycerol).

It belongs to the Lgt family.

The protein resides in the cell inner membrane. It catalyses the reaction L-cysteinyl-[prolipoprotein] + a 1,2-diacyl-sn-glycero-3-phospho-(1'-sn-glycerol) = an S-1,2-diacyl-sn-glyceryl-L-cysteinyl-[prolipoprotein] + sn-glycerol 1-phosphate + H(+). It functions in the pathway protein modification; lipoprotein biosynthesis (diacylglyceryl transfer). Its function is as follows. Catalyzes the transfer of the diacylglyceryl group from phosphatidylglycerol to the sulfhydryl group of the N-terminal cysteine of a prolipoprotein, the first step in the formation of mature lipoproteins. The chain is Phosphatidylglycerol--prolipoprotein diacylglyceryl transferase from Mannheimia succiniciproducens (strain KCTC 0769BP / MBEL55E).